We begin with the raw amino-acid sequence, 374 residues long: Ferroptosis suppressor protein 1 (374 aa).

Glycine 2 carries N-myristoyl glycine lipidation. The helical transmembrane segment at 13–35 (VVIVGGGFAGIAAATQLKSFGIP) threads the bilayer. 6-hydroxy-FAD is bound by residues 17–21 (GGGFA), arginine 53, and valine 81. Lysine 167 is subject to N6-acetyllysine. Residue aspartate 285 coordinates 6-hydroxy-FAD.

This sequence belongs to the FAD-dependent oxidoreductase family. 6-hydroxy-FAD serves as cofactor. In terms of processing, N-myristoylation at Gly-2 mediates the recruitment to lipid droplets and plasma membrane. Post-translationally, acetylation at Lys-167 prevents AIFM2 ubiquitination and degradation, thereby inhibiting ferroptosis. KAT2B mediates acetylation at Lys-167, while HDAC3 removes it. Ubiquitinated. AIFM2 undergoes 'Lys-29'-ubiquitination and proteasomal degradation, which is inhibited by acetylation at Lys-167.

The protein localises to the lipid droplet. It is found in the cell membrane. It localises to the cytoplasm. Its subcellular location is the mitochondrion membrane. The protein resides in the nucleus. The enzyme catalyses ubiquinone-10 + NADH + H(+) = ubiquinol-10 + NAD(+). It carries out the reaction phylloquinone + NADH + H(+) = phylloquinol + NAD(+). It catalyses the reaction menaquinone-4 + NADH + H(+) = menaquinol-4 + NAD(+). The catalysed reaction is menadione + NADH + H(+) = menadiol + NAD(+). With respect to regulation, the modification by 4-hydroxy-2-nonenal (HNE) adduction in mitochondria results in loss of the oxidoreductase activity and activation of a novel function in mitochondrial oxidative stress signaling. An NAD(P)H-dependent oxidoreductase that acts as a key inhibitor of ferroptosis. At the plasma membrane, catalyzes reduction of coenzyme Q/ubiquinone-10 to ubiquinol-10, a lipophilic radical-trapping antioxidant that prevents lipid oxidative damage and consequently ferroptosis. Acts in parallel to GPX4 to suppress phospholipid peroxidation and ferroptosis. This anti-ferroptotic function is independent of cellular glutathione levels. Also acts as a potent radical-trapping antioxidant by mediating warfarin-resistant vitamin K reduction in the canonical vitamin K cycle: catalyzes NAD(P)H-dependent reduction of vitamin K (phylloquinone, menaquinone-4 and menadione) to hydroquinone forms. Hydroquinones act as potent radical-trapping antioxidants inhibitor of phospholipid peroxidation and ferroptosis. May play a role in mitochondrial stress signaling. Upon oxidative stress, associates with the lipid peroxidation end product 4-hydroxy-2-nonenal (HNE) forming a lipid adduct devoid of oxidoreductase activity, which then translocates from mitochondria into the nucleus triggering DNA damage and cell death. This Xenopus tropicalis (Western clawed frog) protein is Ferroptosis suppressor protein 1 (aifm2).